A 394-amino-acid polypeptide reads, in one-letter code: Carbamoyl phosphate synthase small chain (394 aa).

Positions methionine 1 to arginine 188 are CPSase. The L-glutamine site is built by serine 49, glycine 240, and glycine 242. The Glutamine amidotransferase type-1 domain maps to arginine 192 to glycine 379. The Nucleophile role is filled by cysteine 267. Residues leucine 268, glutamine 271, asparagine 309, glycine 311, and tyrosine 312 each contribute to the L-glutamine site. Active-site residues include histidine 352 and glutamate 354.

It belongs to the CarA family. As to quaternary structure, composed of two chains; the small (or glutamine) chain promotes the hydrolysis of glutamine to ammonia, which is used by the large (or ammonia) chain to synthesize carbamoyl phosphate. Tetramer of heterodimers (alpha,beta)4.

The catalysed reaction is hydrogencarbonate + L-glutamine + 2 ATP + H2O = carbamoyl phosphate + L-glutamate + 2 ADP + phosphate + 2 H(+). The enzyme catalyses L-glutamine + H2O = L-glutamate + NH4(+). The protein operates within amino-acid biosynthesis; L-arginine biosynthesis; carbamoyl phosphate from bicarbonate: step 1/1. Its pathway is pyrimidine metabolism; UMP biosynthesis via de novo pathway; (S)-dihydroorotate from bicarbonate: step 1/3. Small subunit of the glutamine-dependent carbamoyl phosphate synthetase (CPSase). CPSase catalyzes the formation of carbamoyl phosphate from the ammonia moiety of glutamine, carbonate, and phosphate donated by ATP, constituting the first step of 2 biosynthetic pathways, one leading to arginine and/or urea and the other to pyrimidine nucleotides. The small subunit (glutamine amidotransferase) binds and cleaves glutamine to supply the large subunit with the substrate ammonia. This is Carbamoyl phosphate synthase small chain from Deinococcus radiodurans (strain ATCC 13939 / DSM 20539 / JCM 16871 / CCUG 27074 / LMG 4051 / NBRC 15346 / NCIMB 9279 / VKM B-1422 / R1).